We begin with the raw amino-acid sequence, 586 residues long: 25S rRNA (adenine-N(1))-methyltransferase (586 aa).

Disordered regions lie at residues 23 to 229 and 536 to 573; these read GTAP…LTPL and GKCVPKDGQEDTTKNKKGGQKPKPKFIEEKDEQEEVKD. The segment covering 25 to 41 has biased composition (low complexity); that stretch reads APAAPAPASAPAVSSSK. Residues 65 to 83 are compositionally biased toward basic and acidic residues; that stretch reads LWEKVIEQKKEGVADGVKK. Polar residues predominate over residues 99-108; that stretch reads KLSNSNNDGN. Over residues 114 to 123 the composition is skewed to basic residues; the sequence is NNKKKNKNKN. The span at 144-163 shows a compositional bias: acidic residues; it reads GEEDEDDNNDDADEWEGIDE. The span at 164–182 shows a compositional bias: basic and acidic residues; sequence DEKHASSEKPTPKKDDKKQ. Residues 183–192 show a composition bias toward low complexity; the sequence is QQLQQQQQQK. Positions 204-213 are enriched in polar residues; that stretch reads NGTTSNWQQD. Over residues 217–229 the composition is skewed to low complexity; sequence PKTATPAPKLTPL. Residues 539–549 are compositionally biased toward basic and acidic residues; it reads VPKDGQEDTTK. Residues 550–559 are compositionally biased toward basic residues; that stretch reads NKKGGQKPKP.

This sequence belongs to the methyltransferase superfamily. RRP8 family.

Its subcellular location is the nucleus. The protein localises to the nucleolus. Its function is as follows. S-adenosyl-L-methionine-dependent methyltransferase that specifically methylates the N(1) position of a conserved adenine in helix 25.1 in 25S rRNA. Required both for ribosomal 40S and 60S subunits biogenesis. Required for efficient pre-rRNA cleavage at site A2. The chain is 25S rRNA (adenine-N(1))-methyltransferase (RPR8) from Chaetomium thermophilum (strain DSM 1495 / CBS 144.50 / IMI 039719) (Thermochaetoides thermophila).